The following is a 201-amino-acid chain: Large ribosomal subunit protein uL4 (201 aa).

Positions 45–71 (AQKTRAEVTGSGKKPWRQKGTGRARAG) are disordered.

Belongs to the universal ribosomal protein uL4 family. Part of the 50S ribosomal subunit.

Functionally, one of the primary rRNA binding proteins, this protein initially binds near the 5'-end of the 23S rRNA. It is important during the early stages of 50S assembly. It makes multiple contacts with different domains of the 23S rRNA in the assembled 50S subunit and ribosome. In terms of biological role, forms part of the polypeptide exit tunnel. The protein is Large ribosomal subunit protein uL4 of Shewanella oneidensis (strain ATCC 700550 / JCM 31522 / CIP 106686 / LMG 19005 / NCIMB 14063 / MR-1).